An 809-amino-acid chain; its full sequence is Glycerol-3-phosphate acyltransferase (809 aa).

Positions 309–314 match the HXXXXD motif motif; that stretch reads HRSHMD.

It belongs to the GPAT/DAPAT family.

It is found in the cell inner membrane. The catalysed reaction is sn-glycerol 3-phosphate + an acyl-CoA = a 1-acyl-sn-glycero-3-phosphate + CoA. Its pathway is phospholipid metabolism; CDP-diacylglycerol biosynthesis; CDP-diacylglycerol from sn-glycerol 3-phosphate: step 1/3. The chain is Glycerol-3-phosphate acyltransferase from Shewanella oneidensis (strain ATCC 700550 / JCM 31522 / CIP 106686 / LMG 19005 / NCIMB 14063 / MR-1).